We begin with the raw amino-acid sequence, 190 residues long: Small ribosomal subunit protein uS5 (190 aa).

In terms of domain architecture, S5 DRBM spans 19–82; that stretch reads IIDKLVTINR…ERAKRSMIRV (64 aa). The disordered stretch occupies residues 161 to 190; the sequence is SVASRRGKKVSDILGRREPVAGQEGEEAHA. The segment covering 169 to 179 has biased composition (basic and acidic residues); that stretch reads KVSDILGRREP.

It belongs to the universal ribosomal protein uS5 family. In terms of assembly, part of the 30S ribosomal subunit. Contacts proteins S4 and S8.

Its function is as follows. With S4 and S12 plays an important role in translational accuracy. In terms of biological role, located at the back of the 30S subunit body where it stabilizes the conformation of the head with respect to the body. This chain is Small ribosomal subunit protein uS5, found in Granulibacter bethesdensis (strain ATCC BAA-1260 / CGDNIH1).